The chain runs to 474 residues: 6-phospho-beta-galactosidase (474 aa).

Residues Gln-18, His-115, Asn-159, Glu-160, and Asn-296 each coordinate D-galactose 6-phosphate. Glu-160 acts as the Proton donor in catalysis. Glu-374 functions as the Nucleophile in the catalytic mechanism. 4 residues coordinate D-galactose 6-phosphate: Ser-427, Trp-428, Lys-434, and Tyr-436.

It belongs to the glycosyl hydrolase 1 family.

It catalyses the reaction a 6-phospho-beta-D-galactoside + H2O = D-galactose 6-phosphate + an alcohol. It participates in carbohydrate metabolism; lactose degradation; D-galactose 6-phosphate and beta-D-glucose from lactose 6-phosphate: step 1/1. This is 6-phospho-beta-galactosidase from Clostridium acetobutylicum (strain ATCC 824 / DSM 792 / JCM 1419 / IAM 19013 / LMG 5710 / NBRC 13948 / NRRL B-527 / VKM B-1787 / 2291 / W).